Reading from the N-terminus, the 370-residue chain is Mitogen-activated protein kinase 3 (370 aa).

In terms of domain architecture, Protein kinase spans 38–324; the sequence is RPPIIPIGRG…VEQALNHQYL (287 aa). ATP is bound by residues 44–52 and Lys-67; that span reads IGRGAYGIV. Asp-164 acts as the Proton acceptor in catalysis. Residue Thr-196 is modified to Phosphothreonine. The TXY signature appears at 196 to 198; it reads TEY. Tyr-198 carries the post-translational modification Phosphotyrosine. Phosphothreonine is present on Thr-201.

Belongs to the protein kinase superfamily. CMGC Ser/Thr protein kinase family. MAP kinase subfamily. As to quaternary structure, interacts with DSPTP1B/MKP2, NDPK2 and VIP1. The interaction with DSPTP1B/MKP2 is repressed by fungal elicitation. Binds to LIP5. Interacts with VQ4. Interacts with RACK1A, RACK1B and RACK1C. Interacts with FLZ9. Interacts with MKK5. In terms of processing, dually phosphorylated on Thr-196 and Tyr-198, which activates the enzyme. Dephosphorylated by DSPTP1B/MKP2.

Its subcellular location is the cytoplasm. The protein resides in the nucleus. It localises to the cell cortex. It carries out the reaction L-seryl-[protein] + ATP = O-phospho-L-seryl-[protein] + ADP + H(+). The catalysed reaction is L-threonyl-[protein] + ATP = O-phospho-L-threonyl-[protein] + ADP + H(+). With respect to regulation, activated by threonine and tyrosine phosphorylation. Activated by MAP kinase kinases MKK4, MKK5, MKK7 and MKK9. Activated in response to hydrogen peroxide, ozone, salt stress and flagellin bacterial elicitor. Triggered by Agrobacterium upon T-DNA transfer. Repressed by DSPTP1B/MKP2-mediated dephosphorylation. In terms of biological role, involved in oxidative stress-mediated signaling cascade (such as ozone). Involved in the innate immune MAP kinase signaling cascade (MEKK1, MKK4/MKK5 and MPK3/MPK6) downstream of bacterial flagellin receptor FLS2. May be involved in hypersensitive response (HR)-mediated signaling cascade by modulating LIP5 phosphorylation and subsequent multivesicular bodies (MVBs) trafficking. May phosphorylate regulators of WRKY transcription factors. Mediates the phosphorylation of VIP1 and subsequent stress genes transcription in response to Agrobacterium. MKK9-MPK3/MPK6 module phosphorylates and activates EIN3, leading to the promotion of EIN3-mediated transcription in ethylene signaling. MPK3/MPK6 cascade regulates camalexin synthesis through transcriptional regulation of the biosynthetic genes after pathogen infection. YDA-MKK4/MKK5-MPK3/MPK6 module regulates stomatal cell fate before the guard mother cell (GMC) is specified. When activated, reinforces the feedback loop by phosphorylating BASL, and inhibits stomatal fate by phosphorylating SPCH. This MAPK cascade also functions downstream of the ER receptor in regulating coordinated local cell proliferation, which shapes the morphology of plant organs. In Arabidopsis thaliana (Mouse-ear cress), this protein is Mitogen-activated protein kinase 3.